A 492-amino-acid polypeptide reads, in one-letter code: Glutamyl-tRNA(Gln) amidotransferase subunit A (492 aa).

Active-site charge relay system residues include Lys79 and Ser154. The active-site Acyl-ester intermediate is the Ser178.

Belongs to the amidase family. GatA subfamily. As to quaternary structure, heterotrimer of A, B and C subunits.

It carries out the reaction L-glutamyl-tRNA(Gln) + L-glutamine + ATP + H2O = L-glutaminyl-tRNA(Gln) + L-glutamate + ADP + phosphate + H(+). Functionally, allows the formation of correctly charged Gln-tRNA(Gln) through the transamidation of misacylated Glu-tRNA(Gln) in organisms which lack glutaminyl-tRNA synthetase. The reaction takes place in the presence of glutamine and ATP through an activated gamma-phospho-Glu-tRNA(Gln). This chain is Glutamyl-tRNA(Gln) amidotransferase subunit A, found in Acinetobacter baumannii (strain AB0057).